Reading from the N-terminus, the 255-residue chain is Taurine import ATP-binding protein TauB (255 aa).

The 228-residue stretch at 2 to 229 folds into the ABC transporter domain; it reads LQISHLYADY…RFVAGESSRS (228 aa). ATP is bound at residue 34-41; sequence GPSGCGKT.

The protein belongs to the ABC transporter superfamily. Taurine importer (TC 3.A.1.17.1) family. As to quaternary structure, the complex is composed of two ATP-binding proteins (TauB), two transmembrane proteins (TauC) and a solute-binding protein (TauA).

It is found in the cell inner membrane. The catalysed reaction is taurine(out) + ATP + H2O = taurine(in) + ADP + phosphate + H(+). In terms of biological role, part of the ABC transporter complex TauABC involved in taurine import. Responsible for energy coupling to the transport system. This Shigella boydii serotype 4 (strain Sb227) protein is Taurine import ATP-binding protein TauB.